The sequence spans 134 residues: Ribosome-binding factor A (134 aa).

This sequence belongs to the RbfA family. In terms of assembly, monomer. Binds 30S ribosomal subunits, but not 50S ribosomal subunits or 70S ribosomes.

The protein localises to the cytoplasm. One of several proteins that assist in the late maturation steps of the functional core of the 30S ribosomal subunit. Associates with free 30S ribosomal subunits (but not with 30S subunits that are part of 70S ribosomes or polysomes). Required for efficient processing of 16S rRNA. May interact with the 5'-terminal helix region of 16S rRNA. The protein is Ribosome-binding factor A of Parasynechococcus marenigrum (strain WH8102).